Reading from the N-terminus, the 237-residue chain is Ribosomal RNA small subunit methyltransferase G (237 aa).

S-adenosyl-L-methionine-binding positions include glycine 76, phenylalanine 81, 128 to 129, and arginine 147; that span reads IE.

The protein belongs to the methyltransferase superfamily. RNA methyltransferase RsmG family.

The protein resides in the cytoplasm. Specifically methylates the N7 position of a guanine in 16S rRNA. This is Ribosomal RNA small subunit methyltransferase G from Prochlorococcus marinus (strain MIT 9301).